The following is a 508-amino-acid chain: Methionine--tRNA ligase (508 aa).

The 'HIGH' region motif lies at 12 to 22 (YYVNDVAHIGH). The short motif at 295–299 (KISKS) is the 'KMSKS' region element. An ATP-binding site is contributed by Lys298.

This sequence belongs to the class-I aminoacyl-tRNA synthetase family. MetG type 2B subfamily. In terms of assembly, monomer.

It is found in the cytoplasm. It catalyses the reaction tRNA(Met) + L-methionine + ATP = L-methionyl-tRNA(Met) + AMP + diphosphate. Is required not only for elongation of protein synthesis but also for the initiation of all mRNA translation through initiator tRNA(fMet) aminoacylation. The polypeptide is Methionine--tRNA ligase (metG) (Rickettsia prowazekii (strain Madrid E)).